The following is a 193-amino-acid chain: Imidazoleglycerol-phosphate dehydratase (193 aa).

This sequence belongs to the imidazoleglycerol-phosphate dehydratase family.

Its subcellular location is the cytoplasm. It catalyses the reaction D-erythro-1-(imidazol-4-yl)glycerol 3-phosphate = 3-(imidazol-4-yl)-2-oxopropyl phosphate + H2O. It functions in the pathway amino-acid biosynthesis; L-histidine biosynthesis; L-histidine from 5-phospho-alpha-D-ribose 1-diphosphate: step 6/9. The chain is Imidazoleglycerol-phosphate dehydratase from Metallosphaera sedula (strain ATCC 51363 / DSM 5348 / JCM 9185 / NBRC 15509 / TH2).